An 813-amino-acid polypeptide reads, in one-letter code: Protein PPP4R3C1 (813 aa).

Positions 730–813 (NESESAIEGQ…PPPKRPNLST (84 aa)) are disordered. Residues 777 to 788 (YDTDDENDDDPY) are compositionally biased toward acidic residues.

It belongs to the SMEK family.

This Mus musculus (Mouse) protein is Protein PPP4R3C1.